Consider the following 252-residue polypeptide: Probable transcriptional regulatory protein DSY2470 (252 aa).

This sequence belongs to the TACO1 family.

The protein localises to the cytoplasm. This is Probable transcriptional regulatory protein DSY2470 from Desulfitobacterium hafniense (strain Y51).